A 259-amino-acid chain; its full sequence is Deoxyribose-phosphate aldolase (259 aa).

The active-site Proton donor/acceptor is the Asp102. Lys167 (schiff-base intermediate with acetaldehyde) is an active-site residue. Catalysis depends on Lys201, which acts as the Proton donor/acceptor.

Belongs to the DeoC/FbaB aldolase family. DeoC type 2 subfamily.

Its subcellular location is the cytoplasm. The enzyme catalyses 2-deoxy-D-ribose 5-phosphate = D-glyceraldehyde 3-phosphate + acetaldehyde. Its pathway is carbohydrate degradation; 2-deoxy-D-ribose 1-phosphate degradation; D-glyceraldehyde 3-phosphate and acetaldehyde from 2-deoxy-alpha-D-ribose 1-phosphate: step 2/2. In terms of biological role, catalyzes a reversible aldol reaction between acetaldehyde and D-glyceraldehyde 3-phosphate to generate 2-deoxy-D-ribose 5-phosphate. The polypeptide is Deoxyribose-phosphate aldolase (Proteus mirabilis (strain HI4320)).